The chain runs to 485 residues: E3 ubiquitin-protein ligase TRIM34A (485 aa).

An RING-type zinc finger spans residues 15–59 (CPVCQELLTKALSLGCGHRVCQACLITKKNAVINPREKSSCPVCG). The B box-type zinc-finger motif lies at 91-132 (TKRDLCVHHGEKLLLFCKEDKKAICWVCERSQEHRGHHTFLW). Zn(2+)-binding residues include Cys96, His99, Cys118, and His124. A coiled-coil region spans residues 136 to 170 (VRECQENLQKALTRLRKEQEKVETLEADIKEDRLS). Positions 282–485 (LSGMLQKFRE…APMTLCPLNS (204 aa)) constitute a B30.2/SPRY domain.

The protein belongs to the TRIM/RBCC family. Homotrimer. Interacts (via B-box and SPRY domain) with TRIM5.

The protein resides in the cytoplasm. It is found in the mitochondrion. The enzyme catalyses S-ubiquitinyl-[E2 ubiquitin-conjugating enzyme]-L-cysteine + [acceptor protein]-L-lysine = [E2 ubiquitin-conjugating enzyme]-L-cysteine + N(6)-ubiquitinyl-[acceptor protein]-L-lysine.. Its pathway is protein modification; protein ubiquitination. Its function is as follows. Functions as antiviral protein and contributes to the defense against retroviral infections. Acts as a capsid-specific restriction factor with the help of TRIM5 and prevents infection from non-host-adapted retroviruses. During influenza A virus infection, promotes programmed cell death by targeting ZBP1 for 'Lys-63'-linked polyubiquitination. In turn, promotes ZBP1 recruitment of RIPK3 to mediate virus-induced programmed necrosis. Negatively regulates the function of mitochondria by enhancing mitochondrial depolarization leading to cytochrome c release and mitochondria-dependent apoptosis. Also promotes the formation of multinucleated giant cells by means of cell fusion and phagocytosis in epithelial cells. Plays an essential role in sustaining the integrity of the inner mucus layer in the colon by controlling the exocytosis of the major component of colonic mucus MUC2 from colonic goblet cells. The chain is E3 ubiquitin-protein ligase TRIM34A from Mus musculus (Mouse).